The chain runs to 238 residues: Small ribosomal subunit protein uS2 (238 aa).

Belongs to the universal ribosomal protein uS2 family.

The polypeptide is Small ribosomal subunit protein uS2 (Synechococcus sp. (strain CC9605)).